A 143-amino-acid chain; its full sequence is Large ribosomal subunit protein uL16c (143 aa).

It belongs to the universal ribosomal protein uL16 family. Part of the 50S ribosomal subunit.

It is found in the plastid. The protein resides in the chloroplast. This Marchantia polymorpha (Common liverwort) protein is Large ribosomal subunit protein uL16c.